The chain runs to 447 residues: Pyruvate kinase (447 aa).

Position 33 (Arg-33) interacts with substrate. Residues Asn-35, Ser-37, and Asp-61 each coordinate K(+). 35–38 contacts ATP; sequence NMSH. Arg-68 contacts ATP. Residue Glu-203 coordinates Mg(2+). Substrate is bound by residues Gly-226, Asp-227, and Thr-259. Residue Asp-227 participates in Mg(2+) binding.

Belongs to the pyruvate kinase family. Homotetramer. The cofactor is Mg(2+). K(+) is required as a cofactor.

It catalyses the reaction pyruvate + ATP = phosphoenolpyruvate + ADP + H(+). The protein operates within carbohydrate degradation; glycolysis; pyruvate from D-glyceraldehyde 3-phosphate: step 5/5. This chain is Pyruvate kinase, found in Methanocaldococcus jannaschii (strain ATCC 43067 / DSM 2661 / JAL-1 / JCM 10045 / NBRC 100440) (Methanococcus jannaschii).